The sequence spans 125 residues: Methylglyoxal synthase (125 aa).

Residues 1 to 125 (MTERLRIALI…TAEKLIKALD (125 aa)) enclose the MGS-like domain. Residues H12, K16, 38–41 (TGTT), and 59–60 (SG) each bind substrate. D65 (proton donor/acceptor) is an active-site residue. Position 92 (H92) interacts with substrate.

This sequence belongs to the methylglyoxal synthase family.

The catalysed reaction is dihydroxyacetone phosphate = methylglyoxal + phosphate. Catalyzes the formation of methylglyoxal from dihydroxyacetone phosphate. The protein is Methylglyoxal synthase of Brucella anthropi (strain ATCC 49188 / DSM 6882 / CCUG 24695 / JCM 21032 / LMG 3331 / NBRC 15819 / NCTC 12168 / Alc 37) (Ochrobactrum anthropi).